Consider the following 266-residue polypeptide: tRNA pseudouridine synthase A (266 aa).

Catalysis depends on aspartate 53, which acts as the Nucleophile. A substrate-binding site is contributed by tyrosine 109.

The protein belongs to the tRNA pseudouridine synthase TruA family.

It catalyses the reaction uridine(38/39/40) in tRNA = pseudouridine(38/39/40) in tRNA. Formation of pseudouridine at positions 38, 39 and 40 in the anticodon stem and loop of transfer RNAs. The chain is tRNA pseudouridine synthase A from Methanocella arvoryzae (strain DSM 22066 / NBRC 105507 / MRE50).